The following is a 475-amino-acid chain: Sulfate adenylyltransferase subunit 1 (475 aa).

Residues 25–241 (KSLLRFLTCG…LENIEIQRVV (217 aa)) enclose the tr-type G domain. The G1 stretch occupies residues 34–41 (GSVDDGKS). A GTP-binding site is contributed by 34 to 41 (GSVDDGKS). The tract at residues 92–96 (GITID) is G2. Residues 113–116 (DTPG) are G3. Residues 113–117 (DTPGH) and 168–171 (NKMD) contribute to the GTP site. The segment at 168 to 171 (NKMD) is G4. The interval 206 to 208 (SAL) is G5.

The protein belongs to the TRAFAC class translation factor GTPase superfamily. Classic translation factor GTPase family. CysN/NodQ subfamily. In terms of assembly, heterodimer composed of CysD, the smaller subunit, and CysN.

The enzyme catalyses sulfate + ATP + H(+) = adenosine 5'-phosphosulfate + diphosphate. It functions in the pathway sulfur metabolism; hydrogen sulfide biosynthesis; sulfite from sulfate: step 1/3. Its function is as follows. With CysD forms the ATP sulfurylase (ATPS) that catalyzes the adenylation of sulfate producing adenosine 5'-phosphosulfate (APS) and diphosphate, the first enzymatic step in sulfur assimilation pathway. APS synthesis involves the formation of a high-energy phosphoric-sulfuric acid anhydride bond driven by GTP hydrolysis by CysN coupled to ATP hydrolysis by CysD. In Cronobacter sakazakii (strain ATCC BAA-894) (Enterobacter sakazakii), this protein is Sulfate adenylyltransferase subunit 1.